A 616-amino-acid chain; its full sequence is UvrABC system protein C (616 aa).

Residues 11–85 enclose the GIY-YIG domain; it reads ASPGVYIFRR…IKQHRPHYNV (75 aa). The region spanning 194–229 is the UVR domain; it reads APVIARLKADMQAAARAQDFEQAARLRDRVQAVEKL.

Belongs to the UvrC family. Interacts with UvrB in an incision complex.

It is found in the cytoplasm. Functionally, the UvrABC repair system catalyzes the recognition and processing of DNA lesions. UvrC both incises the 5' and 3' sides of the lesion. The N-terminal half is responsible for the 3' incision and the C-terminal half is responsible for the 5' incision. The polypeptide is UvrABC system protein C (Deinococcus geothermalis (strain DSM 11300 / CIP 105573 / AG-3a)).